The sequence spans 290 residues: Undecaprenyl-diphosphatase (290 aa).

8 helical membrane passes run 1–21, 48–68, 101–121, 125–145, 161–181, 202–222, 231–251, and 266–286; these read MFLL…LTEF, SAFT…AWVF, IHVL…DDLI, LFSV…MIIA, INYF…WPGF, SDFT…LSLL, AHIP…LIAI, and FAIY…GFGI.

Belongs to the UppP family.

It is found in the cell membrane. The enzyme catalyses di-trans,octa-cis-undecaprenyl diphosphate + H2O = di-trans,octa-cis-undecaprenyl phosphate + phosphate + H(+). Functionally, catalyzes the dephosphorylation of undecaprenyl diphosphate (UPP). Confers resistance to bacitracin. This Staphylococcus epidermidis (strain ATCC 35984 / DSM 28319 / BCRC 17069 / CCUG 31568 / BM 3577 / RP62A) protein is Undecaprenyl-diphosphatase.